Consider the following 448-residue polypeptide: Zinc finger and BTB domain-containing protein 44 (448 aa).

The BTB domain maps to 31 to 98; the sequence is CDITIRVQDK…AYTATLSINT (68 aa). Over residues 289-298 the composition is skewed to basic and acidic residues; it reads LSDEEVHEEV. The disordered stretch occupies residues 289–320; that stretch reads LSDEEVHEEVSQPVSASQSSMSDQQTVPGSEQ. Residues 299 to 313 are compositionally biased toward low complexity; that stretch reads SQPVSASQSSMSDQQ. 2 C2H2-type zinc fingers span residues 394–416 and 422–444; these read FQCPTCGVRFTRIQNLKQHMLIH and FQCDRCGKKFTRAYSLKMHRLKH.

The protein localises to the nucleus. This is Zinc finger and BTB domain-containing protein 44 (zbtb44) from Xenopus tropicalis (Western clawed frog).